The primary structure comprises 32 residues: Calichemicin antitumor antibiotic biosynthesis protein (32 aa).

This chain is Calichemicin antitumor antibiotic biosynthesis protein, found in Micromonospora echinospora (Micromonospora purpurea).